Reading from the N-terminus, the 90-residue chain is Putative toxin RelE1 (90 aa).

The protein belongs to the RelE toxin family.

In terms of biological role, toxic component of a type II toxin-antitoxin (TA) system. Its cognate antitoxin is RelB1 (Potential). The chain is Putative toxin RelE1 (relE1) from Methanocaldococcus jannaschii (strain ATCC 43067 / DSM 2661 / JAL-1 / JCM 10045 / NBRC 100440) (Methanococcus jannaschii).